A 214-amino-acid chain; its full sequence is Thymidylate kinase (214 aa).

Residue 10 to 17 participates in ATP binding; that stretch reads GPDGAGKT.

This sequence belongs to the thymidylate kinase family.

The enzyme catalyses dTMP + ATP = dTDP + ADP. In terms of biological role, phosphorylation of dTMP to form dTDP in both de novo and salvage pathways of dTTP synthesis. The protein is Thymidylate kinase of Levilactobacillus brevis (strain ATCC 367 / BCRC 12310 / CIP 105137 / JCM 1170 / LMG 11437 / NCIMB 947 / NCTC 947) (Lactobacillus brevis).